The primary structure comprises 247 residues: ATP synthase subunit a (247 aa).

6 helical membrane passes run 24 to 44 (IAFT…SLLM), 82 to 102 (FFPF…VGIV), 112 to 132 (IIVT…YGFY), 141 to 161 (LFVP…IEVI), 194 to 214 (MLGA…ALVV), and 219 to 239 (LELL…CIYI).

The protein belongs to the ATPase A chain family. F-type ATPases have 2 components, CF(1) - the catalytic core - and CF(0) - the membrane proton channel. CF(1) has five subunits: alpha(3), beta(3), gamma(1), delta(1), epsilon(1). CF(0) has three main subunits: a(1), b(2) and c(9-12). The alpha and beta chains form an alternating ring which encloses part of the gamma chain. CF(1) is attached to CF(0) by a central stalk formed by the gamma and epsilon chains, while a peripheral stalk is formed by the delta and b chains.

The protein resides in the cell inner membrane. Functionally, key component of the proton channel; it plays a direct role in the translocation of protons across the membrane. This chain is ATP synthase subunit a, found in Nitrobacter hamburgensis (strain DSM 10229 / NCIMB 13809 / X14).